The sequence spans 190 residues: Potassium-transporting ATPase KdpC subunit (190 aa).

Residues 13-33 traverse the membrane as a helical segment; sequence VGFLLLTLVCGVIYPGVVTII.

It belongs to the KdpC family. The system is composed of three essential subunits: KdpA, KdpB and KdpC.

It localises to the cell membrane. Functionally, part of the high-affinity ATP-driven potassium transport (or Kdp) system, which catalyzes the hydrolysis of ATP coupled with the electrogenic transport of potassium into the cytoplasm. This subunit acts as a catalytic chaperone that increases the ATP-binding affinity of the ATP-hydrolyzing subunit KdpB by the formation of a transient KdpB/KdpC/ATP ternary complex. The polypeptide is Potassium-transporting ATPase KdpC subunit (Listeria innocua serovar 6a (strain ATCC BAA-680 / CLIP 11262)).